Consider the following 552-residue polypeptide: Membrane protein insertase YidC (552 aa).

The next 5 helical transmembrane spans lie at valine 7–glutamine 24, tryptophan 364–alanine 384, leucine 434–valine 454, proline 473–proline 493, and proline 508–valine 528.

Belongs to the OXA1/ALB3/YidC family. Type 1 subfamily. Interacts with the Sec translocase complex via SecD. Specifically interacts with transmembrane segments of nascent integral membrane proteins during membrane integration.

It is found in the cell inner membrane. Functionally, required for the insertion and/or proper folding and/or complex formation of integral membrane proteins into the membrane. Involved in integration of membrane proteins that insert both dependently and independently of the Sec translocase complex, as well as at least some lipoproteins. Aids folding of multispanning membrane proteins. This chain is Membrane protein insertase YidC, found in Burkholderia cenocepacia (strain ATCC BAA-245 / DSM 16553 / LMG 16656 / NCTC 13227 / J2315 / CF5610) (Burkholderia cepacia (strain J2315)).